The primary structure comprises 499 residues: Zinc finger protein PLAG1 (499 aa).

The tract at residues 1-33 is disordered; it reads MATVIPGDLSEVRDTQKAPSGKRKRGESKPRKN. Residues 2–84 form an interaction with KPNA2 region; it reads ATVIPGDLSE…SKYKLQRHMA (83 aa). The short motif at 22–25 is the Nuclear localization signal element; that stretch reads KRKR. 7 C2H2-type zinc fingers span residues 34-56, 62-86, 92-114, 121-143, 150-172, 185-207, and 213-236; these read FPCQ…SFSH, YKCT…MATH, HKCN…LHTH, FKCE…LALH, LTCK…LKSH, HQCE…MVVH, and FLCQ…KKSH. The decreased nuclear import with localization in the nucleus but also in the cytoplasm stretch occupies residues 41 to 242; the sequence is KAFNSVEKLK…KKSHNQELLK (202 aa). Residues 243 to 383 form a repression domain; contains 3 sumoylation motifs and massively decrease transcription activity region; it reads VKTEPVDFLD…SQASSSKLGL (141 aa). The activates transcription; Inhibition of nuclear import due to lack of NLS and KPNA2 interaction stretch occupies residues 243 to 499; sequence VKTEPVDFLD…TLPRFHQAFQ (257 aa). Glycyl lysine isopeptide (Lys-Gly) (interchain with G-Cter in SUMO) cross-links involve residues Lys-244 and Lys-263. Residues 364 to 400 are disordered; that stretch reads QGGAPSSSQDSQASSSKLGLEPQSGSPDDGAGDLSLS. Positions 369–379 are enriched in low complexity; that stretch reads SSSQDSQASSS. A massively activates transcription region spans residues 384 to 499; that stretch reads EPQSGSPDDG…TLPRFHQAFQ (116 aa).

This sequence belongs to the krueppel C2H2-type zinc-finger protein family. Interacts with KPNA2, which escorts protein to the nucleus via interaction with nuclear localization signal. Interacts with E3 SUMO-protein ligase PIAS1, PIAS2 and PIAS4. In terms of processing, sumoylated with SUMO1; which inhibits transcriptional activity, but does not affect nuclear localization. Blockers of sumoylation pathway such as SENP3 and inactive UBE2I increases transcriptional capacity. Sumoylation is increased in the presence of PIAS1. Acetylated by lysine acetyltransferase EP300; which activates transcriptional capacity. Lysine residues that are sumoylated also seem to be target for acetylation. Expressed in heart, spleen, lung, kidney, brain, testis and epididymis but not in salivary glands.

The protein resides in the nucleus. Transcription factor whose activation results in up-regulation of target genes, such as IGFII, leading to uncontrolled cell proliferation: when overexpressed in cultured cells, higher proliferation rate and transformation are observed. Other target genes such as CRLF1, CRABP2, CRIP2, PIGF are strongly induced in cells with PLAG1 induction. Proto-oncogene whose ectopic expression can trigger the development of pleomorphic adenomas of the salivary gland and lipoblastomas. Cooperates with CBFB-MYH11. The polypeptide is Zinc finger protein PLAG1 (Plag1) (Rattus norvegicus (Rat)).